A 295-amino-acid polypeptide reads, in one-letter code: N-acetylmuramic acid 6-phosphate etherase (295 aa).

An SIS domain is found at 54–217 (VIAAFRRGGR…STASMVGIGK (164 aa)). Catalysis depends on glutamate 82, which acts as the Proton donor. Residue glutamate 113 is part of the active site.

The protein belongs to the GCKR-like family. MurNAc-6-P etherase subfamily. Homodimer.

The enzyme catalyses N-acetyl-D-muramate 6-phosphate + H2O = N-acetyl-D-glucosamine 6-phosphate + (R)-lactate. Its pathway is amino-sugar metabolism; N-acetylmuramate degradation. In terms of biological role, specifically catalyzes the cleavage of the D-lactyl ether substituent of MurNAc 6-phosphate, producing GlcNAc 6-phosphate and D-lactate. In Geobacillus thermodenitrificans (strain NG80-2), this protein is N-acetylmuramic acid 6-phosphate etherase.